The primary structure comprises 496 residues: Probable CtpA-like serine protease (496 aa).

The segment at 1–26 (MRKCFFMSHNPEEKQSNLDSNHKNES) is disordered. Basic and acidic residues predominate over residues 10-25 (NPEEKQSNLDSNHKNE). Residues 39–59 (FILLLLGVVIITAGITVAATI) traverse the membrane as a helical segment. The 83-residue stretch at 124–206 (TKSFNEDVSG…TTVKLTIKRG (83 aa)) folds into the PDZ domain. Catalysis depends on charge relay system residues Ser329, Asp340, and Lys354.

Belongs to the peptidase S41A family.

It is found in the cell membrane. This is Probable CtpA-like serine protease from Staphylococcus haemolyticus (strain JCSC1435).